The chain runs to 122 residues: Flagellar protein FliT (122 aa).

The tract at residues 1–50 is required for homodimerization; the sequence is MTSTVEFINRWQRIALLSQSLLELAQRGEWDLLLQQEVSYLQRIETVMEK. A fliD binding region spans residues 60–98; sequence IQDMVAGYIKQTLDNEQLLKGLLQQRLDELSSLIGQSTR.

This sequence belongs to the FliT family. As to quaternary structure, homodimer. Interacts with FliD and FlhC.

It is found in the cytoplasm. It localises to the cytosol. Dual-function protein that regulates the transcription of class 2 flagellar operons and that also acts as an export chaperone for the filament-capping protein FliD. As a transcriptional regulator, acts as an anti-FlhDC factor; it directly binds FlhC, thus inhibiting the binding of the FlhC/FlhD complex to class 2 promoters, resulting in decreased expression of class 2 flagellar operons. As a chaperone, effects FliD transition to the membrane by preventing its premature polymerization, and by directing it to the export apparatus. The protein is Flagellar protein FliT of Salmonella paratyphi A (strain AKU_12601).